The sequence spans 154 residues: Large ribosomal subunit protein uL30 (154 aa).

Residues 114 to 139 are disordered; that stretch reads PTLRLHPPRGGHDGIKHPTKEGGQLG. Residues 123 to 133 are compositionally biased toward basic and acidic residues; that stretch reads GGHDGIKHPTK.

Belongs to the universal ribosomal protein uL30 family. As to quaternary structure, part of the 50S ribosomal subunit.

This chain is Large ribosomal subunit protein uL30, found in Natronomonas pharaonis (strain ATCC 35678 / DSM 2160 / CIP 103997 / JCM 8858 / NBRC 14720 / NCIMB 2260 / Gabara) (Halobacterium pharaonis).